Reading from the N-terminus, the 501-residue chain is 5-beta-cholestane-3-alpha,7-alpha-diol 12-alpha-hydroxylase (501 aa).

A helical membrane pass occupies residues 1-21; that stretch reads MVLWGPVLGVLLVAIVGYLCL. At Ser-326 the chain carries Phosphoserine. Cys-440 contributes to the heme binding site.

It belongs to the cytochrome P450 family. Heme is required as a cofactor.

The protein localises to the endoplasmic reticulum membrane. The protein resides in the microsome membrane. It catalyses the reaction 7alpha-hydroxycholest-4-en-3-one + reduced [NADPH--hemoprotein reductase] + O2 = 7alpha,12alpha-dihydroxycholest-4-en-3-one + oxidized [NADPH--hemoprotein reductase] + H2O + H(+). The enzyme catalyses 5beta-cholestane-3alpha,7alpha-diol + reduced [NADPH--hemoprotein reductase] + O2 = 5beta-cholestane-3alpha,7alpha,12alpha-triol + oxidized [NADPH--hemoprotein reductase] + H2O + H(+). The catalysed reaction is chenodeoxycholate + reduced [NADPH--hemoprotein reductase] + O2 = cholate + oxidized [NADPH--hemoprotein reductase] + H2O + H(+). It participates in lipid metabolism; bile acid biosynthesis. Its function is as follows. A cytochrome P450 monooxygenase involved in primary bile acid biosynthesis. Catalyzes the 12alpha-hydroxylation of 7alpha-hydroxy-4-cholesten-3-one, an intermediate metabolite in cholic acid biosynthesis. Controls biliary balance of cholic acid and chenodeoxycholic acid, ultimately regulating the intestinal absorption of dietary lipids. Mechanistically, uses molecular oxygen inserting one oxygen atom into a substrate, and reducing the second into a water molecule, with two electrons provided by NADPH via cytochrome P450 reductase (CPR; NADPH--hemoprotein reductase). This chain is 5-beta-cholestane-3-alpha,7-alpha-diol 12-alpha-hydroxylase (CYP8B1), found in Sus scrofa (Pig).